Here is a 111-residue protein sequence, read N- to C-terminus: Putative protein YddJ (111 aa).

In Escherichia coli (strain K12), this protein is Putative protein YddJ (yddJ).